A 738-amino-acid polypeptide reads, in one-letter code: MKVQRLFLVAIFCLSYMQLVKGQTLPRCPEKCGNVTLEYPFGFSPGCWRAEDPSFNLSCVNENLFYKGLEVVEISHSSQLRVLYPASYICYNSKGKFAKGTYYWSNLGNLTLSGNNTITALGCNSYAFVSSNGTRRNSVGCISACDALSHEANGECNGEGCCQNPVPAGNNWLIVRSYRFDNDTSVQPISEGQCIYAFLVENGKFKYNASDKYSYLQNRNVGFPVVLDWSIRGETCGQVGEKKCGVNGICSNSASGIGYTCKCKGGFQGNPYLQNGCQDINECTTANPIHKHNCSGDSTCENKLGHFRCNCRSRYELNTTTNTCKPKGNPEYVEWTTIVLGTTIGFLVILLAISCIEHKMKNTKDTELRQQFFEQNGGGMLMQRLSGAGPSNVDVKIFTEEGMKEATDGYDENRILGQGGQGTVYKGILPDNSIVAIKKARLGDNSQVEQFINEVLVLSQINHRNVVKLLGCCLETEVPLLVYEFISSGTLFDHLHGSMFDSSLTWEHRLRMAVEIAGTLAYLHSSASIPIIHRDIKTANILLDENLTAKVADFGASRLIPMDKEDLATMVQGTLGYLDPEYYNTGLLNEKSDVYSFGVVLMELLSGQKALCFERPQTSKHIVSYFASATKENRLHEIIDGQVMNENNQREIQKAARIAVECTRLTGEERPGMKEVAAELEALRVTKTKHKWSDEYPEQEDTEHLVGVQKLSAQGETSSSIGYDSIRNVAILDIEAGR.

The first 22 residues, 1-22 (MKVQRLFLVAIFCLSYMQLVKG), serve as a signal peptide directing secretion. Topologically, residues 23–335 (QTLPRCPEKC…PKGNPEYVEW (313 aa)) are extracellular. Residues asparagine 34, asparagine 56, asparagine 109, asparagine 115, asparagine 132, asparagine 182, and asparagine 208 are each glycosylated (N-linked (GlcNAc...) asparagine). Residues 232–278 (RGETCGQVGEKKCGVNGICSNSASGIGYTCKCKGGFQGNPYLQNGCQ) form the EGF-like 1 domain. Disulfide bonds link cysteine 236–cysteine 250, cysteine 244–cysteine 261, cysteine 263–cysteine 277, cysteine 283–cysteine 300, cysteine 294–cysteine 309, and cysteine 311–cysteine 324. The EGF-like 2; calcium-binding domain maps to 279-325 (DINECTTANPIHKHNCSGDSTCENKLGHFRCNCRSRYELNTTTNTCK). An N-linked (GlcNAc...) asparagine glycan is attached at asparagine 293. N-linked (GlcNAc...) asparagine glycosylation is present at asparagine 318. A helical transmembrane segment spans residues 336–356 (TTIVLGTTIGFLVILLAISCI). At 357–738 (EHKMKNTKDT…VAILDIEAGR (382 aa)) the chain is on the cytoplasmic side. Threonine 399 is modified (phosphothreonine). Residues 410 to 693 (YDENRILGQG…RVTKTKHKWS (284 aa)) enclose the Protein kinase domain. Residues 416–424 (LGQGGQGTV) and lysine 438 each bind ATP. Phosphotyrosine is present on tyrosine 483. Catalysis depends on aspartate 535, which acts as the Proton acceptor. A phosphothreonine mark is found at threonine 569 and threonine 574. Tyrosine 582 bears the Phosphotyrosine mark.

This sequence belongs to the protein kinase superfamily. Ser/Thr protein kinase family. As to expression, strictly expressed in siliques.

Its subcellular location is the membrane. The catalysed reaction is L-seryl-[protein] + ATP = O-phospho-L-seryl-[protein] + ADP + H(+). It catalyses the reaction L-threonyl-[protein] + ATP = O-phospho-L-threonyl-[protein] + ADP + H(+). In terms of biological role, serine/threonine-protein kinase that may function as a signaling receptor of extracellular matrix component. Binding to pectin may have significance in the control of cell expansion, morphogenesis and development. The polypeptide is Wall-associated receptor kinase 4 (WAK4) (Arabidopsis thaliana (Mouse-ear cress)).